The primary structure comprises 224 residues: Phosphoribosylformylglycinamidine synthase subunit PurQ (224 aa).

Positions 2 to 224 constitute a Glutamine amidotransferase type-1 domain; sequence KFAVIQFPGS…SILNHAEVKA (223 aa). C86 (nucleophile) is an active-site residue. Catalysis depends on residues H195 and E197.

In terms of assembly, part of the FGAM synthase complex composed of 1 PurL, 1 PurQ and 2 PurS subunits.

The protein resides in the cytoplasm. The catalysed reaction is N(2)-formyl-N(1)-(5-phospho-beta-D-ribosyl)glycinamide + L-glutamine + ATP + H2O = 2-formamido-N(1)-(5-O-phospho-beta-D-ribosyl)acetamidine + L-glutamate + ADP + phosphate + H(+). It catalyses the reaction L-glutamine + H2O = L-glutamate + NH4(+). The protein operates within purine metabolism; IMP biosynthesis via de novo pathway; 5-amino-1-(5-phospho-D-ribosyl)imidazole from N(2)-formyl-N(1)-(5-phospho-D-ribosyl)glycinamide: step 1/2. Its function is as follows. Part of the phosphoribosylformylglycinamidine synthase complex involved in the purines biosynthetic pathway. Catalyzes the ATP-dependent conversion of formylglycinamide ribonucleotide (FGAR) and glutamine to yield formylglycinamidine ribonucleotide (FGAM) and glutamate. The FGAM synthase complex is composed of three subunits. PurQ produces an ammonia molecule by converting glutamine to glutamate. PurL transfers the ammonia molecule to FGAR to form FGAM in an ATP-dependent manner. PurS interacts with PurQ and PurL and is thought to assist in the transfer of the ammonia molecule from PurQ to PurL. In Lactobacillus delbrueckii subsp. bulgaricus (strain ATCC 11842 / DSM 20081 / BCRC 10696 / JCM 1002 / NBRC 13953 / NCIMB 11778 / NCTC 12712 / WDCM 00102 / Lb 14), this protein is Phosphoribosylformylglycinamidine synthase subunit PurQ.